The following is a 377-amino-acid chain: Probable glucokinase 2 (377 aa).

An ATP-binding site is contributed by 27 to 32; it reads CDVGGS.

This sequence belongs to the bacterial glucokinase family.

The catalysed reaction is D-glucose + ATP = D-glucose 6-phosphate + ADP + H(+). In Trichomonas vaginalis, this protein is Probable glucokinase 2 (GK2).